Reading from the N-terminus, the 155-residue chain is Riboflavin kinase (155 aa).

ATP contacts are provided by Gly-15, Lys-21, Thr-27, and Asn-29. Thr-27 and Asn-29 together coordinate Mg(2+). Residue Glu-79 is the Nucleophile of the active site. Residues Ile-82, His-84, and Tyr-91 each coordinate ATP. FMN-binding residues include Arg-104, Lys-107, and Phe-109.

In terms of assembly, monomer. Directly interacts with TNFRSF1A death domain. TNFRSF1A-binding may be supported by TRADD. In the absence of TNFRSF1A, interacts with TRADD. Independently of TNFRSF1A, interacts with the NADPH oxidase subunit CYBA. Zn(2+) is required as a cofactor. Mg(2+) serves as cofactor. Detected in brain, placenta and urinary bladder.

The protein resides in the cytoplasm. It catalyses the reaction riboflavin + ATP = FMN + ADP + H(+). It functions in the pathway cofactor biosynthesis; FMN biosynthesis; FMN from riboflavin (ATP route): step 1/1. In terms of biological role, catalyzes the phosphorylation of riboflavin (vitamin B2) to form flavin-mononucleotide (FMN), hence rate-limiting enzyme in the synthesis of FAD. Essential for TNF-induced reactive oxygen species (ROS) production. Through its interaction with both TNFRSF1A and CYBA, physically and functionally couples TNFRSF1A to NADPH oxidase. TNF-activation of RFK may enhance the incorporation of FAD in NADPH oxidase, a critical step for the assembly and activation of NADPH oxidase. The chain is Riboflavin kinase (RFK) from Homo sapiens (Human).